Consider the following 314-residue polypeptide: Ribosomal RNA small subunit methyltransferase H (314 aa).

S-adenosyl-L-methionine contacts are provided by residues 36 to 38, D56, F80, D102, and Q109; that span reads GGH. The tract at residues 278–300 is disordered; the sequence is GGRSLKSIGKMKPSEEEVADNPR. A compositionally biased stretch (basic and acidic residues) spans 289–300; that stretch reads KPSEEEVADNPR.

Belongs to the methyltransferase superfamily. RsmH family.

It is found in the cytoplasm. The catalysed reaction is cytidine(1402) in 16S rRNA + S-adenosyl-L-methionine = N(4)-methylcytidine(1402) in 16S rRNA + S-adenosyl-L-homocysteine + H(+). Its function is as follows. Specifically methylates the N4 position of cytidine in position 1402 (C1402) of 16S rRNA. The chain is Ribosomal RNA small subunit methyltransferase H from Photorhabdus laumondii subsp. laumondii (strain DSM 15139 / CIP 105565 / TT01) (Photorhabdus luminescens subsp. laumondii).